Here is a 170-residue protein sequence, read N- to C-terminus: Adenine phosphoribosyltransferase (170 aa).

It belongs to the purine/pyrimidine phosphoribosyltransferase family. Homodimer.

The protein localises to the cytoplasm. It carries out the reaction AMP + diphosphate = 5-phospho-alpha-D-ribose 1-diphosphate + adenine. The protein operates within purine metabolism; AMP biosynthesis via salvage pathway; AMP from adenine: step 1/1. Its function is as follows. Catalyzes a salvage reaction resulting in the formation of AMP, that is energically less costly than de novo synthesis. The chain is Adenine phosphoribosyltransferase from Flavobacterium johnsoniae (strain ATCC 17061 / DSM 2064 / JCM 8514 / BCRC 14874 / CCUG 350202 / NBRC 14942 / NCIMB 11054 / UW101) (Cytophaga johnsonae).